We begin with the raw amino-acid sequence, 1128 residues long: Nck-associated protein 1 (1128 aa).

The disordered stretch occupies residues 640-665; the sequence is AVNKKSKKQTGKKGEPEREKPGVESM. A compositionally biased stretch (basic and acidic residues) spans 651–665; sequence KKGEPEREKPGVESM. Residues 995–1015 form a helical membrane-spanning segment; the sequence is IACLLMVFVAVSLPTLASNVM.

It belongs to the HEM-1/HEM-2 family.

It is found in the cell membrane. Its subcellular location is the cell projection. The protein localises to the lamellipodium membrane. Functionally, part of the WAVE complex that regulates lamellipodia formation. The WAVE complex regulates actin filament reorganization via its interaction with the Arp2/3 complex. Actin remodeling activity is regulated by RAC1. Plays a role in neural tube closure. The chain is Nck-associated protein 1 (nckap1) from Xenopus laevis (African clawed frog).